Reading from the N-terminus, the 182-residue chain is Biotin transporter BioY2 (182 aa).

The next 5 membrane-spanning stretches (helical) occupy residues Ile-12–Val-32, Phe-54–Gly-74, Ile-78–Leu-98, Ile-111–Trp-131, and Pro-150–Ile-170.

It belongs to the BioY family. In terms of assembly, in E.coli forms a stable energy-coupling factor (ECF) transporter complex composed of 2 membrane-embedded substrate-binding protein (S component), 2 ATP-binding proteins (A and A' components) and 2 transmembrane proteins (T component), probably with a stoichiometry of 2:1:1:2. May be able to interact with more than 1 S component at a time.

The protein resides in the cell membrane. Its function is as follows. Probably a biotin-binding protein that interacts with the energy-coupling factor (ECF) ABC-transporter complex. Unlike classic ABC transporters this ECF transporter provides the energy necessary to transport a number of different substrates. The substrates themselves are bound by transmembrane, not extracytoplasmic soluble proteins. The protein is Biotin transporter BioY2 (bioY2) of Lactococcus lactis subsp. cremoris (strain MG1363).